The sequence spans 261 residues: Rho-related GTP-binding protein RhoU (261 aa).

Residues 1–48 form a disordered region; it reads MAPQQGRPALPARCEPPAAPPVPPRRERGGRGARGPGVSGGRGRAGGA. The segment covering 7–16 has biased composition (low complexity); that stretch reads RPALPARCEP. Residues 32 to 48 show a composition bias toward gly residues; the sequence is GARGPGVSGGRGRAGGA. GTP is bound by residues 59-66, 106-110, and 164-167; these read GDGAVGKT, DTAGQ, and TQSD. Residues lysine 180 and lysine 251 each participate in a glycyl lysine isopeptide (Lys-Gly) (interchain with G-Cter in ubiquitin) cross-link. A lipid anchor (S-palmitoyl cysteine) is attached at cysteine 259.

This sequence belongs to the small GTPase superfamily. Rho family. As to quaternary structure, interacts with PAK1. Interacts with PAK3. Interacts with ARHGAP30 in a GTP-independent manner. In its GTP-loaded conformation, interacts with ARHGAP31. Interacts with PTK2B/PYK2. Interacts with PAK4; interaction protects RHOU from ubiquitination and subsequent degradation. The cofactor is Mg(2+). Post-translationally, tyrosine phosphorylated by SRC in response to PTK2B/PYK2 activation. In terms of processing, ubiquitinated. 'Lys-48'-linked ubiquitination at Lys-180 and Lys-251 by the ECS(RAB40A) complex leading to its degradation.

Its subcellular location is the cell membrane. It is found in the golgi apparatus membrane. It localises to the cell junction. The protein resides in the focal adhesion. The protein localises to the cell projection. Its subcellular location is the podosome. In terms of biological role, binds to and activates protein kinase PAK1. Plays a role in the regulation of cell morphology, cytoskeletal organization and focal adhesion assembly during cell migration. Also stimulates quiescent cells to reenter the cell cycle. Has no detectable GTPase activity but its high intrinsic guanine nucleotide exchange activity suggests it is constitutively GTP-bound. The sequence is that of Rho-related GTP-binding protein RhoU from Mus musculus (Mouse).